A 210-amino-acid polypeptide reads, in one-letter code: Large ribosomal subunit protein uL16 (210 aa).

The protein belongs to the universal ribosomal protein uL16 family. In terms of assembly, component of the large ribosomal subunit. Mature ribosomes consist of a small (40S) and a large (60S) subunit. The 40S subunit contains about 33 different proteins and 1 molecule of RNA (18S). The 60S subunit contains about 49 different proteins and 3 molecules of RNA (28S, 5.8S and 5S).

Its subcellular location is the cytoplasm. Its function is as follows. Component of the large ribosomal subunit. Plays a role in the formation of actively translating ribosomes. (Microbial infection) Seems to bind to the leucine zipper of viral and cellular JUN. In Gallus gallus (Chicken), this protein is Large ribosomal subunit protein uL16.